We begin with the raw amino-acid sequence, 264 residues long: Phosphonoacetaldehyde hydrolase (264 aa).

The Nucleophile role is filled by D9. Residues D9 and A11 each coordinate Mg(2+). Residue K50 is the Schiff-base intermediate with substrate of the active site. D183 serves as a coordination point for Mg(2+).

This sequence belongs to the HAD-like hydrolase superfamily. PhnX family. Homodimer. Mg(2+) is required as a cofactor.

It carries out the reaction phosphonoacetaldehyde + H2O = acetaldehyde + phosphate + H(+). Functionally, involved in phosphonate degradation. In Bacillus cytotoxicus (strain DSM 22905 / CIP 110041 / 391-98 / NVH 391-98), this protein is Phosphonoacetaldehyde hydrolase.